We begin with the raw amino-acid sequence, 149 residues long: MLFMAGPAASWSLRPLGLHGVPQALCAVLLTVLVMKTLVLGDTKLEDLHPQSLPLNKYLNCYRCLLETEELGCLLGSDTCLTPLGSSCVTLHIKNSSGFNVMVSDCYSKEQMVHCSYTRASPVFGFWIFYQCCFLDFCNNPDNRKNSMH.

An N-terminal signal peptide occupies residues methionine 1–glycine 41. The UPAR/Ly6 domain maps to leucine 59–histidine 149. 5 cysteine pairs are disulfide-bonded: cysteine 61–cysteine 88, cysteine 64–cysteine 73, cysteine 80–cysteine 106, cysteine 115–cysteine 132, and cysteine 133–cysteine 138. An N-linked (GlcNAc...) asparagine glycan is attached at asparagine 95.

Forms oligomers. In terms of processing, N-glycosylated. Detected in adult brain.

It localises to the secreted. Its function is as follows. May have a role in hematopoietic cell differentiation. This is Lymphocyte antigen 6 complex locus protein G5c (Ly6g5c) from Mus musculus (Mouse).